Consider the following 124-residue polypeptide: Small ribosomal subunit protein uS12 (124 aa).

Residues 1 to 23 (MATINQLVRKPRRSKVTKSNSAA) are disordered. Residue Asp-89 is modified to 3-methylthioaspartic acid.

This sequence belongs to the universal ribosomal protein uS12 family. As to quaternary structure, part of the 30S ribosomal subunit. Contacts proteins S8 and S17. May interact with IF1 in the 30S initiation complex.

Its function is as follows. With S4 and S5 plays an important role in translational accuracy. In terms of biological role, interacts with and stabilizes bases of the 16S rRNA that are involved in tRNA selection in the A site and with the mRNA backbone. Located at the interface of the 30S and 50S subunits, it traverses the body of the 30S subunit contacting proteins on the other side and probably holding the rRNA structure together. The combined cluster of proteins S8, S12 and S17 appears to hold together the shoulder and platform of the 30S subunit. In Pseudoalteromonas translucida (strain TAC 125), this protein is Small ribosomal subunit protein uS12.